The sequence spans 62 residues: Large ribosomal subunit protein bL35 (62 aa).

Residues 1-26 show a composition bias toward basic residues; it reads MPKMKTKSGLKKRIKITATGKVKRGN. The interval 1 to 62 is disordered; sequence MPKMKTKSGL…SDFKRYKELI (62 aa). Basic and acidic residues predominate over residues 53 to 62; that stretch reads SDFKRYKELI.

Belongs to the bacterial ribosomal protein bL35 family.

The chain is Large ribosomal subunit protein bL35 from Metamycoplasma arthritidis (strain 158L3-1) (Mycoplasma arthritidis).